A 92-amino-acid chain; its full sequence is UPF0213 protein M28_Spy1146 (92 aa).

Positions 4–80 (KKAYMYVLEC…KRKTRSQKLA (77 aa)) constitute a GIY-YIG domain.

It belongs to the UPF0213 family.

In Streptococcus pyogenes serotype M28 (strain MGAS6180), this protein is UPF0213 protein M28_Spy1146.